We begin with the raw amino-acid sequence, 379 residues long: GTP cyclohydrolase 1 type 2 homolog (379 aa).

A divalent metal cation-binding residues include His-64, His-65, Asp-103, His-333, and Glu-337.

This sequence belongs to the GTP cyclohydrolase I type 2/NIF3 family. In terms of assembly, homohexamer.

This chain is GTP cyclohydrolase 1 type 2 homolog, found in Mycobacterium bovis (strain ATCC BAA-935 / AF2122/97).